Reading from the N-terminus, the 246-residue chain is MLYLHDVWVNWFEGEENGYNVCHFYEWRKDDAIELLDQVPVLKVSAPLFHHLENSLAEIPKALLEDVYQKAYVRKNHERIQLDYCFIATDGYGIIAIDTIGYHIPIRKSRLIPRQEQLVYEMMKEQEVRTYPFQQSEKEYHILSPHPALMSGLTRKERQLKQLLFMALDQLYGTKNVAEVRYWYTEWAPEKYAYIQQMSFEEAWNGLYEEAKYGWSERHVHLCERLVKGQPFFEKLWEMEQEPKVN.

The protein belongs to the UPF0736 family.

The protein is UPF0736 protein Aflv_2136 of Anoxybacillus flavithermus (strain DSM 21510 / WK1).